Here is a 374-residue protein sequence, read N- to C-terminus: Type II methyltransferase M.BbvI (374 aa).

Positions F3 to I347 constitute an SAM-dependent MTase C5-type domain. C92 is a catalytic residue.

Belongs to the class I-like SAM-binding methyltransferase superfamily. C5-methyltransferase family.

The catalysed reaction is a 2'-deoxycytidine in DNA + S-adenosyl-L-methionine = a 5-methyl-2'-deoxycytidine in DNA + S-adenosyl-L-homocysteine + H(+). A methylase, recognizes the double-stranded sequence 5'-GCAGC-3', methylates C-2 on both strands, and protects the DNA from cleavage by the BbvI endonuclease. The chain is Type II methyltransferase M.BbvI (bbvIM) from Brevibacillus brevis (Bacillus brevis).